The chain runs to 294 residues: Retinoic acid receptor responder protein 1 (294 aa).

At 1–20 the chain is on the lumenal side; the sequence is MQPRRQRLPAPWSGPRGPRP. Residues 21-42 form a helical; Signal-anchor for type III membrane protein membrane-spanning segment; that stretch reads TAPLLALLLLLAPVAAPAGSGD. Cystatin LXN-type domains are found at residues 38–153 and 173–276; these read AGSG…EKKK and EIVS…TPEE. O-linked (Xyl...) (chondroitin sulfate) serine glycosylation occurs at Ser-40. Topologically, residues 43 to 294 are cytoplasmic; sequence PDDPGQPQDA…AVVPTELSNF (252 aa). The interval 273-294 is disordered; the sequence is TPEEASGTEEGSAVVPTELSNF.

Belongs to the protease inhibitor I47 (latexin) family. As to quaternary structure, interacts with AGBL2, KIF11 and MAPRE1. Not N-glycosylated. O-glycosylated; contains chondroitin sulfate. As to expression, detected in urine (at protein level).

The protein resides in the membrane. It localises to the secreted. Inhibitor of the cytoplasmic carboxypeptidase AGBL2, may regulate the alpha-tubulin tyrosination cycle. In Homo sapiens (Human), this protein is Retinoic acid receptor responder protein 1 (RARRES1).